The chain runs to 183 residues: Peptide deformylase (183 aa).

Fe cation contacts are provided by Cys-110 and His-153. Glu-154 is an active-site residue. His-157 provides a ligand contact to Fe cation.

This sequence belongs to the polypeptide deformylase family. Fe(2+) is required as a cofactor.

The catalysed reaction is N-terminal N-formyl-L-methionyl-[peptide] + H2O = N-terminal L-methionyl-[peptide] + formate. Functionally, removes the formyl group from the N-terminal Met of newly synthesized proteins. Requires at least a dipeptide for an efficient rate of reaction. N-terminal L-methionine is a prerequisite for activity but the enzyme has broad specificity at other positions. In Listeria monocytogenes serotype 4b (strain CLIP80459), this protein is Peptide deformylase.